Here is a 201-residue protein sequence, read N- to C-terminus: Small ribosomal subunit protein uS5 (201 aa).

Positions 1 to 27 are disordered; sequence MAGPQRRGSGAGGGERRDRKGRDGGAA. Residues 14 to 23 are compositionally biased toward basic and acidic residues; the sequence is GERRDRKGRD. The 64-residue stretch at 34 to 97 folds into the S5 DRBM domain; it reads YVERVVAINR…EEAKKHFFKV (64 aa).

Belongs to the universal ribosomal protein uS5 family. Part of the 30S ribosomal subunit. Contacts proteins S4 and S8.

Its function is as follows. With S4 and S12 plays an important role in translational accuracy. In terms of biological role, located at the back of the 30S subunit body where it stabilizes the conformation of the head with respect to the body. The chain is Small ribosomal subunit protein uS5 from Streptomyces avermitilis (strain ATCC 31267 / DSM 46492 / JCM 5070 / NBRC 14893 / NCIMB 12804 / NRRL 8165 / MA-4680).